A 431-amino-acid chain; its full sequence is Adenylosuccinate synthetase (431 aa).

GTP is bound by residues Gly13–Lys19 and Gly41–Thr43. Asp14 (proton acceptor) is an active-site residue. Residues Asp14 and Gly41 each coordinate Mg(2+). IMP-binding positions include Asp14–Lys17, Asn39–His42, Thr130, Arg144, Gln225, Thr240, and Arg304. His42 (proton donor) is an active-site residue. Position 300–306 (Ser300–Arg306) interacts with substrate. GTP contacts are provided by residues Arg306, Lys332–Asp334, and Ser414–Gly416.

Belongs to the adenylosuccinate synthetase family. As to quaternary structure, homodimer. The cofactor is Mg(2+).

It is found in the cytoplasm. The enzyme catalyses IMP + L-aspartate + GTP = N(6)-(1,2-dicarboxyethyl)-AMP + GDP + phosphate + 2 H(+). Its pathway is purine metabolism; AMP biosynthesis via de novo pathway; AMP from IMP: step 1/2. In terms of biological role, plays an important role in the de novo pathway of purine nucleotide biosynthesis. Catalyzes the first committed step in the biosynthesis of AMP from IMP. The protein is Adenylosuccinate synthetase of Bordetella petrii (strain ATCC BAA-461 / DSM 12804 / CCUG 43448).